The primary structure comprises 513 residues: Serine/threonine-protein kinase UL13 homolog (513 aa).

Residues 1–27 (MDTESKNKKTTNGGENSNCSHSTRTPD) are disordered. Residues 10–23 (TTNGGENSNCSHST) are compositionally biased toward polar residues. A Protein kinase domain is found at 145–487 (KEMPIYAGSG…FDSLNIFPYL (343 aa)). ATP contacts are provided by residues 151 to 159 (AGSGSYGVV) and Lys170. The active-site Proton acceptor is Asp268.

It belongs to the protein kinase superfamily. Ser/Thr protein kinase family. Post-translationally, autophosphorylated.

The protein localises to the virion tegument. It is found in the host nucleus. It catalyses the reaction L-seryl-[protein] + ATP = O-phospho-L-seryl-[protein] + ADP + H(+). The catalysed reaction is L-threonyl-[protein] + ATP = O-phospho-L-threonyl-[protein] + ADP + H(+). Functionally, multifunctional serine/threonine kinase that plays a role in several processes including egress of virus particles from the nucleus, modulation of the actin cytoskeleton and regulation of viral and cellular gene expression. This Gallid herpesvirus 2 (strain Chicken/Md5/ATCC VR-987) (GaHV-2) protein is Serine/threonine-protein kinase UL13 homolog (MDV025).